A 459-amino-acid chain; its full sequence is MMLPSVLQVKRLQPELITPAKPTPQETKFLSEIDDQESLRFQVPVIMCYKANPSLNKNRNPVKVIREALSRALVYYYPLAGRLREGPNKKLVVDCNGEGILFVEASADVTLEQLGDKILPPCPLLEEFLFNFPGSGGIIGCPLLLVQVTCLTCGGFILALRLNHTMCDASGLLLFLTAIAEMARGAHAPSILPVWERELLFARNPPRITCAHHEYEDVIDHSDGSYAFSNQSNMVQRSFYFGAKEMRVLRKQIPPHLISTCSTFDLITACLWKCRTLALKINPKQAVRVSCIVNARGKHHNVRLPLGYYGNAFAYPAAVSKAEPLCKNPLGYALELVKKAKATMNEEYLRSVADLMVLRGRPQYSTTGCYLIVSDNTRAGFGDVNFGWGEPVFAGPAKALDLISFYVQHKNNTEDGILVPMCLSSSAMERFQQELERITQEPKEDICNNLRSTRIMSMM.

Catalysis depends on proton acceptor residues His164 and Asn385.

The protein belongs to the plant acyltransferase family. As to expression, expressed at very low levels in the cortex and skin of ripe fruit.

In terms of biological role, involved in the biosynthesis of volatile esters which confer ripe apple fruit flavor. Alcohol acyl transferase that can use a wide range of alcohols as substrate to produce esters. The polypeptide is Alcohol acyl transferase 1 allele GSd (Malus domestica (Apple)).